A 374-amino-acid polypeptide reads, in one-letter code: Flap endonuclease 1 (374 aa).

Positions 1–105 (MGIKGLTALI…ELLQKRFGRR (105 aa)) are N-domain. Asp-34 is a binding site for Mg(2+). Residues Arg-47 and Arg-71 each coordinate DNA. A Mg(2+)-binding site is contributed by Asp-87. Residues 103 to 122 (GRREEAREQEEEQKDVADAE) form a disordered region. Positions 123 to 254 (KMDQLARRQV…KTALKLIREH (132 aa)) are I-domain. Positions 159, 161, 180, and 182 each coordinate Mg(2+). Glu-159 is a DNA binding site. DNA-binding residues include Gly-232 and Asp-234. Asp-234 lines the Mg(2+) pocket. The segment at 335-374 (SLSQKQQGRLDGFFTVKPGSAPPKRKAEDDKKNVKKKGKK) is disordered. Residues 340 to 348 (QQGRLDGFF) form an interaction with PCNA region.

This sequence belongs to the XPG/RAD2 endonuclease family. FEN1 subfamily. Interacts with PCNA. Three molecules of FEN1 bind to one PCNA trimer with each molecule binding to one PCNA monomer. PCNA stimulates the nuclease activity without altering cleavage specificity. It depends on Mg(2+) as a cofactor. In terms of processing, phosphorylated. Phosphorylation upon DNA damage induces relocalization to the nuclear plasma.

The protein localises to the nucleus. It localises to the nucleolus. The protein resides in the nucleoplasm. Its subcellular location is the mitochondrion. Functionally, structure-specific nuclease with 5'-flap endonuclease and 5'-3' exonuclease activities involved in DNA replication and repair. During DNA replication, cleaves the 5'-overhanging flap structure that is generated by displacement synthesis when DNA polymerase encounters the 5'-end of a downstream Okazaki fragment. It enters the flap from the 5'-end and then tracks to cleave the flap base, leaving a nick for ligation. Also involved in the long patch base excision repair (LP-BER) pathway, by cleaving within the apurinic/apyrimidinic (AP) site-terminated flap. Acts as a genome stabilization factor that prevents flaps from equilibrating into structures that lead to duplications and deletions. Also possesses 5'-3' exonuclease activity on nicked or gapped double-stranded DNA, and exhibits RNase H activity. Also involved in replication and repair of rDNA and in repairing mitochondrial DNA. The protein is Flap endonuclease 1 of Mycosarcoma maydis (Corn smut fungus).